The primary structure comprises 218 residues: Eukaryotic translation initiation factor 3 subunit K (218 aa).

A PCI domain is found at 42 to 204 (YDLEANLAVL…NIKPKNIVEK (163 aa)).

This sequence belongs to the eIF-3 subunit K family. As to quaternary structure, component of the eukaryotic translation initiation factor 3 (eIF-3) complex, which is composed of 13 subunits: eif3a, eif3b, eif3c, eif3d, eif3e, eif3f, eif3g, eif3h, eif3i, eif3j, eif3k, eif3l and eif3m.

Its subcellular location is the nucleus. It is found in the cytoplasm. In terms of biological role, component of the eukaryotic translation initiation factor 3 (eIF-3) complex, which is involved in protein synthesis of a specialized repertoire of mRNAs and, together with other initiation factors, stimulates binding of mRNA and methionyl-tRNAi to the 40S ribosome. The eIF-3 complex specifically targets and initiates translation of a subset of mRNAs involved in cell proliferation. This Xenopus tropicalis (Western clawed frog) protein is Eukaryotic translation initiation factor 3 subunit K (eif3k).